A 731-amino-acid polypeptide reads, in one-letter code: Small conductance calcium-activated potassium channel protein 3 (731 aa).

Basic and acidic residues predominate over residues 1–11 (MDTSGHFHDSG). 2 disordered regions span residues 1-170 (MDTS…SNPF) and 239-258 (ATHN…FPKA). Positions 30–40 (QQQQQQQQQQQ) are enriched in low complexity. The segment covering 41–51 (QPPPPAPPAAP) has biased composition (pro residues). Low complexity predominate over residues 52–95 (QQPLGPSLQPQPPQLQQQQQQQQQQQQQQPPHPLSQLAQLQSQP). The segment covering 112–132 (PSSNSTAILHPSSRQGSQLNL) has biased composition (polar residues). The segment covering 138-147 (GHSPSSTATS) has biased composition (low complexity). Ser-167 carries the phosphoserine modification. The span at 239–256 (ATHNHQHAGTTASSTTFP) shows a compositional bias: polar residues. A helical membrane pass occupies residues 288 to 308 (LIFGMFGIVVMVIETELSWGL). The helical transmembrane segment at 315-335 (FSLALKCLISLSTIILLGLII) threads the bilayer. Residues 366-386 (ISLEMLVCAIHPIPGEYKFFW) traverse the membrane as a helical segment. A helical membrane pass occupies residues 405 to 425 (IILSIPMFLRLYLIARVMLLH). A helical membrane pass occupies residues 454–474 (LMTICPGTVLLVFSISLWIIA). The pore-forming intramembrane region spans 494–514 (FLGAMWLISITFLSIGYGDMV). A helical membrane pass occupies residues 523–543 (VCLLTGIMGAGCTALVVAVVA). The calmodulin-binding stretch occupies residues 561–637 (DTQLTKRIKN…LVDLSKMQNV (77 aa)). Positions 642–669 (ITELNDRSEDLEKQIGSLESKLEHLTAS) form a coiled coil. The disordered stretch occupies residues 709–731 (ISDSPIGVSSTSFPTPYTSSSSC). The span at 717-731 (SSTSFPTPYTSSSSC) shows a compositional bias: low complexity.

It belongs to the potassium channel KCNN family. KCa2.3/KCNN3 subfamily. In terms of assembly, homodimer. Heteromultimer with KCNN2 or KCNN1; this modulates plasma membrane expression and consequently the small conductance calcium-activated potassium channel activity. The complex is composed of 4 channel subunits each of which binds to a calmodulin subunit which regulates the channel activity through calcium-binding. Interacts with CALM1. In terms of tissue distribution, widely distributed in human tissues and is present at 20-60% of KCNN3 in the brain.

The protein resides in the cell membrane. It is found in the cytoplasm. It localises to the myofibril. The protein localises to the sarcomere. Its subcellular location is the z line. The catalysed reaction is K(+)(in) = K(+)(out). Its activity is regulated as follows. Inhibited by bee venom neurotoxin apamin. In terms of biological role, small conductance calcium-activated potassium channel that mediates the voltage-independent transmembrane transfer of potassium across the cell membrane through a constitutive interaction with calmodulin which binds the intracellular calcium allowing its opening. The current is characterized by a voltage-independent activation, an intracellular calcium concentration increase-dependent activation and a single-channel conductance of 10 picosiemens. Also presents an inwardly rectifying current, thus reducing its already small outward conductance of potassium ions, which is particularly the case when the membrane potential displays positive values, above + 20 mV. Activation is followed by membrane hyperpolarization. Thought to regulate neuronal excitability by contributing to the slow component of synaptic afterhyperpolarization. Its function is as follows. Does not function as a small conductance calcium-activated potassium channel. Selectively suppresses endogenous KCNN3 currents, in a dominant-negative fashion by decreasing the abundance of functional channels in the plasma membrane, possibly by selectively coassembling with and sequestering native KCNN3 protein in intracellular compartments. This dominant inhibitory effect extends to other members of the SK subfamily. The sequence is that of Small conductance calcium-activated potassium channel protein 3 from Homo sapiens (Human).